Consider the following 147-residue polypeptide: Hemoglobin subunit epsilon (147 aa).

In terms of domain architecture, Globin spans 3-147 (HFTAEEKAAI…VAIALGHKYH (145 aa)). Phosphoserine is present on residues Ser-14 and Ser-51. The heme b site is built by His-64 and His-93.

This sequence belongs to the globin family. As to quaternary structure, heterotetramer of two alpha chains and two epsilon chains in early embryonic hemoglobin Gower-2; two zeta chains and two epsilon chains in early embryonic hemoglobin Gower-1. Red blood cells.

The epsilon chain is a beta-type chain of early mammalian embryonic hemoglobin. The protein is Hemoglobin subunit epsilon (HBE1) of Pithecia irrorata (Gray monk saki).